The primary structure comprises 145 residues: Arginine repressor (145 aa).

This sequence belongs to the ArgR family.

The protein resides in the cytoplasm. It functions in the pathway amino-acid biosynthesis; L-arginine biosynthesis [regulation]. Regulates arginine biosynthesis genes. In Streptococcus pyogenes serotype M6 (strain ATCC BAA-946 / MGAS10394), this protein is Arginine repressor.